A 412-amino-acid polypeptide reads, in one-letter code: Proteasome-activating nucleotidase (412 aa).

Residues 15–73 adopt a coiled-coil conformation; it reads EDIYQYLLERITNLENRNLELREQFRQMESEKRYVETQKIRYERELRKLKSEIEQLRSP. Residues 197–202 and H336 contribute to the ATP site; that span reads GTGKTL. A docks into pockets in the proteasome alpha-ring to cause gate opening region spans residues 410-412; it reads MFA.

The protein belongs to the AAA ATPase family. In terms of assembly, homohexamer. The hexameric complex has a two-ring architecture resembling a top hat that caps the 20S proteasome core at one or both ends. Upon ATP-binding, the C-terminus of PAN interacts with the alpha-rings of the proteasome core by binding to the intersubunit pockets.

It is found in the cytoplasm. ATPase which is responsible for recognizing, binding, unfolding and translocation of substrate proteins into the archaeal 20S proteasome core particle. Is essential for opening the gate of the 20S proteasome via an interaction with its C-terminus, thereby allowing substrate entry and access to the site of proteolysis. Thus, the C-termini of the proteasomal ATPase function like a 'key in a lock' to induce gate opening and therefore regulate proteolysis. Unfolding activity requires energy from ATP hydrolysis, whereas ATP binding alone promotes ATPase-20S proteasome association which triggers gate opening, and supports translocation of unfolded substrates. In Methanoculleus marisnigri (strain ATCC 35101 / DSM 1498 / JR1), this protein is Proteasome-activating nucleotidase.